The sequence spans 506 residues: Lysine--tRNA ligase (506 aa).

2 residues coordinate Mg(2+): glutamate 416 and glutamate 423.

The protein belongs to the class-II aminoacyl-tRNA synthetase family. In terms of assembly, homodimer. The cofactor is Mg(2+).

It localises to the cytoplasm. It carries out the reaction tRNA(Lys) + L-lysine + ATP = L-lysyl-tRNA(Lys) + AMP + diphosphate. This is Lysine--tRNA ligase from Sodalis glossinidius (strain morsitans).